Reading from the N-terminus, the 208-residue chain is Ribosomal RNA large subunit methyltransferase E (208 aa).

Glycine 62, tryptophan 64, aspartate 82, aspartate 98, and aspartate 123 together coordinate S-adenosyl-L-methionine. The active-site Proton acceptor is the lysine 163.

It belongs to the class I-like SAM-binding methyltransferase superfamily. RNA methyltransferase RlmE family.

It localises to the cytoplasm. It carries out the reaction uridine(2552) in 23S rRNA + S-adenosyl-L-methionine = 2'-O-methyluridine(2552) in 23S rRNA + S-adenosyl-L-homocysteine + H(+). Specifically methylates the uridine in position 2552 of 23S rRNA at the 2'-O position of the ribose in the fully assembled 50S ribosomal subunit. The chain is Ribosomal RNA large subunit methyltransferase E from Actinobacillus succinogenes (strain ATCC 55618 / DSM 22257 / CCUG 43843 / 130Z).